A 210-amino-acid chain; its full sequence is MSLVKPLTARQQEVYNFLKHYIETTGMPPTRAEISRELGFRSPNAAEEHLKALARKGAVEILAGTSRGIRLLLDAANDEPEGLPLIGQVAAGEPILAEQHIEGTYRVDPDMFKPQADFLLKVNGQSMKNIGILDGDLLAVHSTKDVRNGQVIVARIEDEVTVKRLERKGDVIYLHAENEEFAPIVVNLREQERFEIEGIAVGIIRNNAWM.

The segment at residues 31–51 (RAEISRELGFRSPNAAEEHLK) is a DNA-binding region (H-T-H motif). Catalysis depends on for autocatalytic cleavage activity residues S126 and K163.

Belongs to the peptidase S24 family. As to quaternary structure, homodimer.

It catalyses the reaction Hydrolysis of Ala-|-Gly bond in repressor LexA.. In terms of biological role, represses a number of genes involved in the response to DNA damage (SOS response), including recA and lexA. In the presence of single-stranded DNA, RecA interacts with LexA causing an autocatalytic cleavage which disrupts the DNA-binding part of LexA, leading to derepression of the SOS regulon and eventually DNA repair. This chain is LexA repressor, found in Actinobacillus succinogenes (strain ATCC 55618 / DSM 22257 / CCUG 43843 / 130Z).